The primary structure comprises 231 residues: Orotidine 5'-phosphate decarboxylase (231 aa).

Substrate-binding positions include Asp11, Lys33, 60–69, Thr120, Arg181, Gln190, Gly210, and Arg211; that span reads DLKFHDIPNT. The active-site Proton donor is Lys62.

The protein belongs to the OMP decarboxylase family. Type 1 subfamily. Homodimer.

The enzyme catalyses orotidine 5'-phosphate + H(+) = UMP + CO2. Its pathway is pyrimidine metabolism; UMP biosynthesis via de novo pathway; UMP from orotate: step 2/2. Catalyzes the decarboxylation of orotidine 5'-monophosphate (OMP) to uridine 5'-monophosphate (UMP). The polypeptide is Orotidine 5'-phosphate decarboxylase (Vibrio atlanticus (strain LGP32) (Vibrio splendidus (strain Mel32))).